A 593-amino-acid chain; its full sequence is Autophagy-related protein 22-2 (593 aa).

A helical transmembrane segment spans residues 42–62 (YGVAAEVFAVCGVGSFLPLTL). N-linked (GlcNAc...) asparagine glycosylation occurs at Asn-90. Transmembrane regions (helical) follow at residues 112–132 (SFAM…LVSF), 159–179 (LFML…VIGV), and 181–201 (CLGS…ANDP). The disordered stretch occupies residues 228 to 261 (SWTDEEDTGDHAGPAGSKKAVEPEKASSSTSPEL). Helical transmembrane passes span 271-291 (GVGL…LLLF), 305-325 (LPLR…TVVC), 377-397 (VVVF…VSGT), and 415-435 (LLSI…PIVA). Asn-443 is a glycosylation site (N-linked (GlcNAc...) asparagine). Transmembrane regions (helical) follow at residues 448 to 468 (LCIA…IPFI), 480 to 500 (WEIF…ASYC), 525 to 545 (KGSS…TGSV), and 548 to 568 (GFIF…LVNA).

This sequence belongs to the ATG22 family.

The protein resides in the vacuole membrane. Vacuolar effluxer which mediate the efflux of amino acids resulting from autophagic degradation. The release of autophagic amino acids allows the maintenance of protein synthesis and viability during nitrogen starvation. This is Autophagy-related protein 22-2 (atg22-2) from Emericella nidulans (strain FGSC A4 / ATCC 38163 / CBS 112.46 / NRRL 194 / M139) (Aspergillus nidulans).